A 549-amino-acid chain; its full sequence is Membrane protein insertase YidC (549 aa).

A helical membrane pass occupies residues 9-29; sequence LRLILAIALSFLFIALYSYFF. A compositionally biased stretch (low complexity) spans 37-51; it reads TETTKQETTNNHTAT. The segment at 37–56 is disordered; the sequence is TETTKQETTNNHTATSPTAS. The next 5 helical transmembrane spans lie at 328–348, 351–371, 417–437, 452–472, and 498–518; these read VIEY…LDYL, FVGN…IILY, GANP…FFAI, WVLW…PLLM, and LLPL…VLYW.

It belongs to the OXA1/ALB3/YidC family. Type 1 subfamily. Interacts with the Sec translocase complex via SecD. Specifically interacts with transmembrane segments of nascent integral membrane proteins during membrane integration.

The protein localises to the cell inner membrane. Required for the insertion and/or proper folding and/or complex formation of integral membrane proteins into the membrane. Involved in integration of membrane proteins that insert both dependently and independently of the Sec translocase complex, as well as at least some lipoproteins. Aids folding of multispanning membrane proteins. This is Membrane protein insertase YidC from Helicobacter pylori (strain J99 / ATCC 700824) (Campylobacter pylori J99).